The following is a 145-amino-acid chain: D-aminoacyl-tRNA deacylase (145 aa).

A Gly-cisPro motif, important for rejection of L-amino acids motif is present at residues 137–138 (GP).

It belongs to the DTD family. In terms of assembly, homodimer.

It localises to the cytoplasm. It carries out the reaction glycyl-tRNA(Ala) + H2O = tRNA(Ala) + glycine + H(+). The catalysed reaction is a D-aminoacyl-tRNA + H2O = a tRNA + a D-alpha-amino acid + H(+). In terms of biological role, an aminoacyl-tRNA editing enzyme that deacylates mischarged D-aminoacyl-tRNAs. Also deacylates mischarged glycyl-tRNA(Ala), protecting cells against glycine mischarging by AlaRS. Acts via tRNA-based rather than protein-based catalysis; rejects L-amino acids rather than detecting D-amino acids in the active site. By recycling D-aminoacyl-tRNA to D-amino acids and free tRNA molecules, this enzyme counteracts the toxicity associated with the formation of D-aminoacyl-tRNA entities in vivo and helps enforce protein L-homochirality. This Lactobacillus delbrueckii subsp. bulgaricus (strain ATCC BAA-365 / Lb-18) protein is D-aminoacyl-tRNA deacylase.